The chain runs to 605 residues: Protein Spindly (605 aa).

Position 1 is an N-acetylmethionine (Met-1). Residues 2-442 (EADIITNLRC…ELKLKYEPEE (441 aa)) are a coiled coil. Phosphoserine occurs at positions 513, 515, and 555. The interval 544 to 580 (ALSERSGNTPNSPRLAAESKLQTEVKEGKETSSKLEK) is disordered. Over residues 564–580 (LQTEVKEGKETSSKLEK) the composition is skewed to basic and acidic residues.

The protein belongs to the Spindly family. Interacts with KNTC1 and ZW10. These interactions appear weak and may be transient or indirect. Interacts with dynein intermediate chain and dynactin (DCTN1). Interacts with the catalytically active form of USP45. In terms of processing, monoubiquitinated with'Lys-48' linkage. Deubiquitinated by USP45.

The protein resides in the cytoplasm. It is found in the cytoskeleton. The protein localises to the microtubule organizing center. Its subcellular location is the centrosome. It localises to the chromosome. The protein resides in the centromere. It is found in the kinetochore. The protein localises to the nucleus. Its subcellular location is the spindle pole. Functionally, required for the localization of dynein and dynactin to the mitotic kintochore. Dynein is believed to control the initial lateral interaction between the kinetochore and spindle microtubules and to facilitate the subsequent formation of end-on kinetochore-microtubule attachments mediated by the NDC80 complex. Also required for correct spindle orientation. Does not appear to be required for the removal of spindle assembly checkpoint (SAC) proteins from the kinetochore upon bipolar spindle attachment. Acts as an adapter protein linking the dynein motor complex to various cargos and converts dynein from a non-processive to a highly processive motor in the presence of dynactin. Facilitates the interaction between dynein and dynactin and activates dynein processivity (the ability to move along a microtubule for a long distance without falling off the track). Plays a role in cell migration. This Homo sapiens (Human) protein is Protein Spindly.